Reading from the N-terminus, the 54-residue chain is IVTVDCSDYPKPVCSPENMPVCGSDSKTYSNKCDFCNAVADSNGTLTLSHFGKC.

Positions 4–54 (VDCSDYPKPVCSPENMPVCGSDSKTYSNKCDFCNAVADSNGTLTLSHFGKC) constitute a Kazal-like domain. 3 disulfides stabilise this stretch: Cys-6/Cys-36, Cys-14/Cys-33, and Cys-22/Cys-54. Asn-43 carries N-linked (GlcNAc...) asparagine glycosylation.

It is found in the secreted. The chain is Ovomucoid from Nycticorax nycticorax (Black-crowned night-heron).